The sequence spans 1029 residues: Protein STABILIZED1 (1029 aa).

The region spanning 1–85 (MVFLSIPNGK…VIIHVLLLGG (85 aa)) is the Ubiquitin-like domain. Residue G85 forms a Glycyl lysine isopeptide (Gly-Lys) (interchain with K-? in acceptor proteins) linkage. The disordered stretch occupies residues 142 to 170 (AAPGVGRGAGKPSEAEAEDDEEAEEKRYD). A coiled-coil region spans residues 210-243 (DSRRKDRREAKLKEEIEKYRASNPKITEQFADLK). HAT repeat units follow at residues 367–399 (YDRN…VEEV), 401–431 (GKIK…CRLA), 432–462 (NPED…KLEH), 463–494 (DVEN…LANE), 496–524 (DARI…LETY), 526–554 (ESKK…LEEA), 639–671 (GSIE…LEKS), 673–705 (GSRE…EKWL), 707–739 (GDVP…LEFE), 741–772 (KEPE…VERE), 774–806 (GNVE…LEER), 808–840 (KHLE…LEEK), 842–874 (NGLN…AELR), 876–908 (DNKR…MAPR), and 940–972 (KKVE…FELQ). One copy of the TPR 1 repeat lies at 625–658 (KRTWVADADECKKRGSIETARAIYAHALSVFLTK). A TPR 2 repeat occupies 794–827 (FKLWLMLGQLEERFKHLEQARKAYDTGLKHCPHC). The TPR 3 repeat unit spans residues 926–959 (PHVTIAVAKLFWQDKKVEKARAWFERAVTVGPDI).

In terms of assembly, component of a pre-mRNA splicing complex. Interacts with ZOP1. Interacts with PRP31. Ubiquitous.

The protein localises to the nucleus. Its subcellular location is the cajal body. In terms of biological role, pre-mRNA splicing factor required for splicing and for the turnover of unstable transcripts. May be a U5 snRNP-associated protein involved in the formation of U4/U6-U5 tri-snRNP. Involved in responses to abiotic stresses. Involved in microRNAs (miRNAs) biogenesis by functioning in primary miRNAs (pri-miRNAs) splicing. Required for DNA methylation and transcriptional silencing through the RNA-directed DNA methylation (RdDM) pathway. The protein is Protein STABILIZED1 (STA1) of Arabidopsis thaliana (Mouse-ear cress).